Consider the following 155-residue polypeptide: uncharacterized protein (155 aa).

The first 30 residues, 1-30, serve as a signal peptide directing secretion; it reads MTYNTNTSLSSYAGLSAFALSVFCILWGTA.

This is an uncharacterized protein from Treponema pallidum (strain Nichols).